The chain runs to 361 residues: MRAALALEDGTIVHGELFGSPREAEGEVVFNTSHTGFQEALTDPSYRGQILIMTFPMQGNYGILPEVGESDRVQVEGFVVRYLHDGPIHPRAEITLDEFLQDHGVPGIAGVDTRMLTRKIRTEGAMRGVLVPYEPDDQPSDEELLERVREVPHISEMDLVPQVSVREEYRFSDGKPEIVVIDCGVKRSILRELAKRGAGVTVVPYDTSAQEIMDIDPDGVVVSNGPGDPKRVRETVETVRELIGQVPLMGICLGNQILGLAEGGDTFKLKFGHRGANQPVKDLDKDRVYITSQNHGFALDPDSLRDTPLRVRWVNVNDGTVEGVVHTDAPAFSVQFHPEAGPGPWDTKWVFDEFLAMCREH.

Positions 1–173 (MRAALALEDG…SVREEYRFSD (173 aa)) are CPSase. Residues serine 45, glycine 225, and glycine 227 each contribute to the L-glutamine site. The Glutamine amidotransferase type-1 domain maps to 177–361 (EIVVIDCGVK…DEFLAMCREH (185 aa)). Cysteine 252 serves as the catalytic Nucleophile. Leucine 253, glutamine 256, asparagine 294, glycine 296, and phenylalanine 297 together coordinate L-glutamine. Active-site residues include histidine 337 and glutamate 339.

The protein belongs to the CarA family. In terms of assembly, composed of two chains; the small (or glutamine) chain promotes the hydrolysis of glutamine to ammonia, which is used by the large (or ammonia) chain to synthesize carbamoyl phosphate. Tetramer of heterodimers (alpha,beta)4.

It carries out the reaction hydrogencarbonate + L-glutamine + 2 ATP + H2O = carbamoyl phosphate + L-glutamate + 2 ADP + phosphate + 2 H(+). The catalysed reaction is L-glutamine + H2O = L-glutamate + NH4(+). It functions in the pathway amino-acid biosynthesis; L-arginine biosynthesis; carbamoyl phosphate from bicarbonate: step 1/1. Its pathway is pyrimidine metabolism; UMP biosynthesis via de novo pathway; (S)-dihydroorotate from bicarbonate: step 1/3. Functionally, small subunit of the glutamine-dependent carbamoyl phosphate synthetase (CPSase). CPSase catalyzes the formation of carbamoyl phosphate from the ammonia moiety of glutamine, carbonate, and phosphate donated by ATP, constituting the first step of 2 biosynthetic pathways, one leading to arginine and/or urea and the other to pyrimidine nucleotides. The small subunit (glutamine amidotransferase) binds and cleaves glutamine to supply the large subunit with the substrate ammonia. The sequence is that of Carbamoyl phosphate synthase small chain from Methanopyrus kandleri (strain AV19 / DSM 6324 / JCM 9639 / NBRC 100938).